The primary structure comprises 146 residues: MIAAVIPIFVISLSNISHIILAIFFFPSIVEFLDDLYWGFTYRSWSPIARQLELGPNIYIHHSKVSILMDKADLYEKNQSRKDILNYYREEDKDFEQYLNFRENRKMLQQAFESGTLIRKQNYRARIHERMVEQPVTEKKELLRSR.

The helical transmembrane segment at 6 to 26 threads the bilayer; sequence IPIFVISLSNISHIILAIFFF.

It localises to the membrane. This is an uncharacterized protein from Caenorhabditis elegans.